Reading from the N-terminus, the 77-residue chain is Acyl carrier protein (77 aa).

In terms of domain architecture, Carrier spans 2 to 77 (SNIEERVKKI…AAIDYVSKNQ (76 aa)). Ser-37 bears the O-(pantetheine 4'-phosphoryl)serine mark.

Belongs to the acyl carrier protein (ACP) family. In terms of processing, 4'-phosphopantetheine is transferred from CoA to a specific serine of apo-ACP by AcpS. This modification is essential for activity because fatty acids are bound in thioester linkage to the sulfhydryl of the prosthetic group.

The protein localises to the cytoplasm. It participates in lipid metabolism; fatty acid biosynthesis. Its function is as follows. Carrier of the growing fatty acid chain in fatty acid biosynthesis. In Shewanella oneidensis (strain ATCC 700550 / JCM 31522 / CIP 106686 / LMG 19005 / NCIMB 14063 / MR-1), this protein is Acyl carrier protein.